The chain runs to 95 residues: UPF0132 membrane protein AF_0736 (95 aa).

Helical transmembrane passes span 2 to 22 (CYTL…SPFV), 32 to 52 (TFST…GALL), and 55 to 75 (VVMA…SRGE).

Belongs to the UPF0132 family.

The protein localises to the cell membrane. This is UPF0132 membrane protein AF_0736 from Archaeoglobus fulgidus (strain ATCC 49558 / DSM 4304 / JCM 9628 / NBRC 100126 / VC-16).